We begin with the raw amino-acid sequence, 650 residues long: 1-deoxy-D-xylulose-5-phosphate synthase (650 aa).

Residues 1 to 13 (MSKIKNDKRETGH) are compositionally biased toward basic and acidic residues. The interval 1–23 (MSKIKNDKRETGHLKSPPETPLL) is disordered. Thiamine diphosphate contacts are provided by residues His92 and 133–135 (AHS). Asp164 lines the Mg(2+) pocket. Thiamine diphosphate-binding positions include 165 to 166 (GA), Asn193, Tyr302, and Glu384. Asn193 contacts Mg(2+).

Belongs to the transketolase family. DXPS subfamily. In terms of assembly, homodimer. Requires Mg(2+) as cofactor. Thiamine diphosphate serves as cofactor.

The catalysed reaction is D-glyceraldehyde 3-phosphate + pyruvate + H(+) = 1-deoxy-D-xylulose 5-phosphate + CO2. It participates in metabolic intermediate biosynthesis; 1-deoxy-D-xylulose 5-phosphate biosynthesis; 1-deoxy-D-xylulose 5-phosphate from D-glyceraldehyde 3-phosphate and pyruvate: step 1/1. Its function is as follows. Catalyzes the acyloin condensation reaction between C atoms 2 and 3 of pyruvate and glyceraldehyde 3-phosphate to yield 1-deoxy-D-xylulose-5-phosphate (DXP). This chain is 1-deoxy-D-xylulose-5-phosphate synthase, found in Chelativorans sp. (strain BNC1).